We begin with the raw amino-acid sequence, 143 residues long: Small ribosomal subunit protein eS12 (143 aa).

This sequence belongs to the eukaryotic ribosomal protein eS12 family.

This Hordeum vulgare (Barley) protein is Small ribosomal subunit protein eS12 (RPS12).